We begin with the raw amino-acid sequence, 233 residues long: Antiholin-like protein LrgB (233 aa).

A run of 7 helical transmembrane segments spans residues 9-29 (TPYFGILLSVIPFFLATILFE), 34-54 (FFLFAPLFVSMVFGVAFLYLT), 63-83 (IGGDIIYFFLEPATICFAIPL), 97-117 (IIGGIGIGTVVALLIILTFAK), 121-141 (FANDVILSMLPQAATTAIALP), 144-164 (AGIGGIKELTSLAVILNGVII), and 212-232 (IALVLVGVVVVAVVPVFVAIF).

It belongs to the CidB/LrgB family. LrgB subfamily.

Its subcellular location is the cell membrane. Its function is as follows. Inhibits the expression or activity of extracellular murein hydrolases by interacting, possibly with LrgA, with the holin-like proteins CidA and/or CidB. The LrgAB and CidAB proteins may affect the proton motive force of the membrane. May be involved in programmed cell death (PCD), possibly triggering PCD in response to antibiotics and environmental stresses. This Staphylococcus aureus (strain Mu3 / ATCC 700698) protein is Antiholin-like protein LrgB.